Reading from the N-terminus, the 505-residue chain is Kinesin light chain 3 (505 aa).

Residues 1-20 (MSVQVAAPGSTGLGPERLNP) are disordered. A coiled-coil region spans residues 90–150 (ALSAHVGVLE…EEEKSHLQFL (61 aa)). The segment at 154–197 (RQYDPPEESQRPDSPPRRDSLASLFPSEEEEKKGPEAAGAAAAQ) is disordered. The span at 161–173 (ESQRPDSPPRRDS) shows a compositional bias: basic and acidic residues. The residue at position 173 (serine 173) is a Phosphoserine. TPR repeat units follow at residues 207–240 (LRTLHNLVIQYASQGRYEVAVPLCRQALEDLERS), 249–282 (ATMLNILALVYRDQNKYKEATELLHDALQIREQT), 291–324 (AATLNNLAVLYGKRGRYREAEPLCQRALEIREKV), 333–366 (AKQLNNLALLCQNQGKFQDVERHYARALSIYEAL), and 375–408 (AKTKNNLASAYLKQNKYQQAEELYKEILSQEALP). Positions 409–439 (APLGAPQGGTAGEAQQQVLRRSSSFSKLRES) are disordered. A compositionally biased stretch (polar residues) spans 421–434 (EAQQQVLRRSSSFS). Serine 467 bears the Phosphoserine mark. Residues 486–505 (QHLNEASRTLSASTQDLSPR) form a disordered region. Threonine 499 is subject to Phosphothreonine. A Phosphoserine modification is found at serine 503.

This sequence belongs to the kinesin light chain family. In terms of assembly, oligomer composed of two heavy chains and two light chains. Associates with microtubulin in an ATP-dependent manner. Interacts with KIF5C. Interacts with ODF1. Interacts with LRGUK. Interacts with VDAC2. As to expression, expressed in postmeiotic male germ cells (at protein level).

Its subcellular location is the cytoplasm. The protein localises to the cytoskeleton. It is found in the mitochondrion. Kinesin is a microtubule-associated force-producing protein that may play a role in organelle transport. Plays a role during spermiogenesis in the development of the sperm tail midpiece and in the normal function of spermatozoa. May play a role in the formation of the mitochondrial sheath formation in the developing spermatid midpiece. The polypeptide is Kinesin light chain 3 (Klc3) (Rattus norvegicus (Rat)).